The sequence spans 120 residues: Large ribosomal subunit protein bL17 (120 aa).

The protein belongs to the bacterial ribosomal protein bL17 family. In terms of assembly, part of the 50S ribosomal subunit. Contacts protein L32.

This is Large ribosomal subunit protein bL17 from Bacillus velezensis (strain DSM 23117 / BGSC 10A6 / LMG 26770 / FZB42) (Bacillus amyloliquefaciens subsp. plantarum).